The primary structure comprises 358 residues: Protein-glutamate methylesterase/protein-glutamine glutaminase 1 (358 aa).

The Response regulatory domain occupies 8–125 (RVLIVDDSAV…ARGLEGYAEE (118 aa)). Asp59 bears the 4-aspartylphosphate mark. The 188-residue stretch at 165–352 (FRTTDRLIAI…LDRVAERLLA (188 aa)) folds into the CheB-type methylesterase domain. Active-site residues include Ser177, His203, and Asp299.

Belongs to the CheB family. Phosphorylated by CheA. Phosphorylation of the N-terminal regulatory domain activates the methylesterase activity.

It localises to the cytoplasm. It carries out the reaction [protein]-L-glutamate 5-O-methyl ester + H2O = L-glutamyl-[protein] + methanol + H(+). The catalysed reaction is L-glutaminyl-[protein] + H2O = L-glutamyl-[protein] + NH4(+). Involved in chemotaxis. Part of a chemotaxis signal transduction system that modulates chemotaxis in response to various stimuli. Catalyzes the demethylation of specific methylglutamate residues introduced into the chemoreceptors (methyl-accepting chemotaxis proteins or MCP) by CheR. Also mediates the irreversible deamidation of specific glutamine residues to glutamic acid. This chain is Protein-glutamate methylesterase/protein-glutamine glutaminase 1, found in Xanthomonas axonopodis pv. citri (strain 306).